Consider the following 476-residue polypeptide: Variant surface glycoprotein MITAT 1.2 (476 aa).

Residues 1-26 form the signal peptide; the sequence is MPSNQEARLFLAVLVLAQVLPILVDS. Intrachain disulfides connect Cys-41–Cys-171 and Cys-149–Cys-213. Asn-289 is a glycosylation site (N-linked (GlcNAc...) asparagine). 2 disordered regions span residues 389–418 and 435–459; these read QKHKPAESQQQAAETEGSCNKKDQNECKSP and EEAKKVADETAKDGKTGNTNTTGSS. 2 cysteine pairs are disulfide-bonded: Cys-407–Cys-419 and Cys-415–Cys-430. Over residues 435-449 the composition is skewed to basic and acidic residues; it reads EEAKKVADETAKDGK. The segment covering 450–459 has biased composition (low complexity); it reads TGNTNTTGSS. N-linked (GlcNAc...) asparagine glycosylation occurs at Asn-454. A lipid anchor (GPI-anchor amidated serine) is attached at Ser-459. A propeptide spans 460 to 476 (removed in mature form); sequence NSFVISKTPLWLAVLLF.

In terms of assembly, homodimer.

Its subcellular location is the cell membrane. Functionally, VSG forms a coat on the surface of the parasite. The trypanosome evades the immune response of the host by expressing a series of antigenically distinct VSGs from an estimated 1000 VSG genes. The protein is Variant surface glycoprotein MITAT 1.2 of Trypanosoma brucei brucei.